Consider the following 514-residue polypeptide: Histidine ammonia-lyase (514 aa).

A cross-link (5-imidazolinone (Cys-Gly)) is located at residues 143–145; it reads CSG. A 2,3-didehydroalanine (Ser) modification is found at serine 144.

It belongs to the PAL/histidase family. Post-translationally, contains an active site 4-methylidene-imidazol-5-one (MIO), which is formed autocatalytically by cyclization and dehydration of residues Cys-Ser-Gly.

It is found in the cytoplasm. It catalyses the reaction L-histidine = trans-urocanate + NH4(+). It functions in the pathway amino-acid degradation; L-histidine degradation into L-glutamate; N-formimidoyl-L-glutamate from L-histidine: step 1/3. This chain is Histidine ammonia-lyase (hutH), found in Streptomyces griseus.